The following is a 178-amino-acid chain: MSKSGTKITFYEDKHFQGRHYDCDCDCADFHMYLSRCNSIRVEGGTWAVYERPNFAGYMYILPRGEYPEYQHWMGLNDRLSSCRAVHLSSGGQYKIQIFEKGDFNGQMYETTEDCPSIMEQFHMREVHSSKVLDGVWIFYELPNYRGRQYLLDKKEYRKPIDWGAASPAVQSFRRIVE.

Ser2 is subject to N-acetylserine. Positions 2 to 5 (SKSG) are N-terminal arm. 2 Beta/gamma crystallin 'Greek key' domains span residues 6-44 (TKIT…RVEG) and 45-87 (GTWA…RAVH). Residues 88 to 93 (LSSGGQ) form a connecting peptide region. Beta/gamma crystallin 'Greek key' domains follow at residues 94-134 (YKIQ…KVLD) and 135-177 (GVWI…RRIV).

The protein belongs to the beta/gamma-crystallin family. Monomer.

In terms of biological role, crystallins are the dominant structural components of the vertebrate eye lens. The polypeptide is Gamma-crystallin S (CRYGS) (Canis lupus familiaris (Dog)).